The sequence spans 432 residues: D-amino acid dehydrogenase (432 aa).

FAD is bound at residue 3-17 (VVVLGSGVVGVTSAW).

It belongs to the DadA oxidoreductase family. FAD is required as a cofactor.

It catalyses the reaction a D-alpha-amino acid + A + H2O = a 2-oxocarboxylate + AH2 + NH4(+). The protein operates within amino-acid degradation; D-alanine degradation; NH(3) and pyruvate from D-alanine: step 1/1. Oxidative deamination of D-amino acids. The protein is D-amino acid dehydrogenase of Enterobacter sp. (strain 638).